Consider the following 164-residue polypeptide: NADH-quinone oxidoreductase subunit I 1 (164 aa).

4Fe-4S ferredoxin-type domains are found at residues 54-84 and 95-124; these read LRRY…IEAG and VRYD…EGPN. Cys64, Cys67, Cys70, Cys74, Cys104, Cys107, Cys110, and Cys114 together coordinate [4Fe-4S] cluster.

The protein belongs to the complex I 23 kDa subunit family. NDH-1 is composed of 14 different subunits. Subunits NuoA, H, J, K, L, M, N constitute the membrane sector of the complex. [4Fe-4S] cluster is required as a cofactor.

It localises to the cell inner membrane. The enzyme catalyses a quinone + NADH + 5 H(+)(in) = a quinol + NAD(+) + 4 H(+)(out). Its function is as follows. NDH-1 shuttles electrons from NADH, via FMN and iron-sulfur (Fe-S) centers, to quinones in the respiratory chain. The immediate electron acceptor for the enzyme in this species is believed to be ubiquinone. Couples the redox reaction to proton translocation (for every two electrons transferred, four hydrogen ions are translocated across the cytoplasmic membrane), and thus conserves the redox energy in a proton gradient. The protein is NADH-quinone oxidoreductase subunit I 1 of Rhizobium meliloti (strain 1021) (Ensifer meliloti).